A 1143-amino-acid polypeptide reads, in one-letter code: Serine/threonine-protein kinase BRI1-like 2 (1143 aa).

The signal sequence occupies residues 1–31 (MTTSPIRVRIRTRIQISFIFLLTHLSQSSSS). The Extracellular segment spans residues 32-756 (DQSSLKTDSL…GTRAASWANS (725 aa)). The Cys pair 1 motif lies at 68 to 75 (CQFSGVTC). LRR repeat units follow at residues 77 to 101 (GGRV…AFTS), 102 to 125 (LDSL…LLLL), 126 to 150 (PLTL…FFSK), 151 to 175 (YSNL…LFLS), 177 to 200 (KKLQ…TIPL), 203 to 227 (CVSM…LINC), 228 to 250 (TNLK…SFGE), 251 to 275 (LKLL…IGDT), 277 to 299 (RSLQ…SLSS), 300 to 324 (CSWL…ILRS), 326 to 349 (GSLQ…ISAC), 351 to 373 (SLRI…LCPG), 374 to 398 (AASL…ISQC), 399 to 422 (SELR…IGNL), 424 to 446 (KLEQ…IGKL), 447 to 470 (QNLK…FFNC), 472 to 493 (NIEW…DFGI), 494 to 518 (LSRL…LGKC), 520 to 542 (TLVW…LGRQ), 570 to 594 (VGGL…KSCD), 610 to 634 (YQTI…IGEM), 635 to 660 (IALQ…QLKN), 662 to 681 (GVFD…SFSN), and 682 to 707 (LSFL…QLST). Asparagine 84 and asparagine 118 each carry an N-linked (GlcNAc...) asparagine glycan. Residues asparagine 163, asparagine 188, asparagine 226, and asparagine 234 are each glycosylated (N-linked (GlcNAc...) asparagine). N-linked (GlcNAc...) asparagine glycosylation is found at asparagine 288 and asparagine 312. The N-linked (GlcNAc...) asparagine glycan is linked to asparagine 412. An N-linked (GlcNAc...) asparagine glycan is attached at asparagine 469. N-linked (GlcNAc...) asparagine glycosylation is present at asparagine 506. An N-linked (GlcNAc...) asparagine glycan is attached at asparagine 681. A Cys pair 2 motif is present at residues 720 to 727 (CGVPLPEC). A helical transmembrane segment spans residues 757 to 777 (IVLGVLISAASVCILIVWAIA). Topologically, residues 778–1143 (VRARRRDADD…NNSHSHSNSL (366 aa)) are cytoplasmic. Threonine 835 is subject to Phosphothreonine. In terms of domain architecture, Protein kinase spans 838 to 1129 (FSAASMIGHG…LQVVASLREL (292 aa)). ATP-binding positions include 844-852 (IGHGGFGEV) and lysine 866. Tyrosine 911 is modified (phosphotyrosine). The Proton acceptor role is filled by aspartate 966. Serine 1001 carries the post-translational modification Phosphoserine. Phosphotyrosine is present on tyrosine 1009.

This sequence belongs to the protein kinase superfamily. Ser/Thr protein kinase family. As to quaternary structure, interacts with TTL3. As to expression, expressed in provascular and procambial sites throughout plant development. Expressed throughout globe- to heart-staged embryos. Then, it is restricted to procambial cells by the late torpedo stage, and this pattern persists throughout the duration of embryo development. After germination, it is expressed not only in procambial cells throughout the plant but also in all lateral organ primordia before the onset of vascularization.

The protein resides in the cell membrane. It catalyses the reaction L-seryl-[protein] + ATP = O-phospho-L-seryl-[protein] + ADP + H(+). It carries out the reaction L-threonyl-[protein] + ATP = O-phospho-L-threonyl-[protein] + ADP + H(+). Functionally, receptor with a serine/threonine-protein kinase activity, which may transduce extracellular spatial and temporal signals into downstream cell differentiation responses in provascular and procambial cells. In contrast to BRI1, BRL1 and BRL3, it does not bind brassinolide. This is Serine/threonine-protein kinase BRI1-like 2 from Arabidopsis thaliana (Mouse-ear cress).